An 842-amino-acid chain; its full sequence is Valine--tRNA ligase (842 aa).

The short motif at 86-96 (PFTSGELHMGH) is the 'HIGH' region element. Positions 572–576 (RMSKS) match the 'KMSKS' region motif. Lysine 575 serves as a coordination point for ATP.

The protein belongs to the class-I aminoacyl-tRNA synthetase family. ValS type 2 subfamily.

It is found in the cytoplasm. The catalysed reaction is tRNA(Val) + L-valine + ATP = L-valyl-tRNA(Val) + AMP + diphosphate. Catalyzes the attachment of valine to tRNA(Val). As ValRS can inadvertently accommodate and process structurally similar amino acids such as threonine, to avoid such errors, it has a 'posttransfer' editing activity that hydrolyzes mischarged Thr-tRNA(Val) in a tRNA-dependent manner. The polypeptide is Valine--tRNA ligase (Saccharolobus solfataricus (strain ATCC 35092 / DSM 1617 / JCM 11322 / P2) (Sulfolobus solfataricus)).